Reading from the N-terminus, the 100-residue chain is MQLTPREVEKLMIYTLSDVAFKRKARGLKLNYPEAVSIITETAMEGARDGKSVEDVMKEASKVLTKDDVMDGVADLIPNVQVEAIFTDGSRLVTVHDPIK.

This sequence belongs to the urease gamma subunit family. As to quaternary structure, heterotrimer of UreA (gamma), UreB (beta) and UreC (alpha) subunits. Three heterotrimers associate to form the active enzyme.

The protein resides in the cytoplasm. It catalyses the reaction urea + 2 H2O + H(+) = hydrogencarbonate + 2 NH4(+). Its pathway is nitrogen metabolism; urea degradation; CO(2) and NH(3) from urea (urease route): step 1/1. Its function is as follows. Expression of the urease operon increases the likelihood of bacterial survival by contributing to acid resistance in vitro and in vivo in BALB/c mice. Y.enterocolitica enters the body via an oral path and must survive the acidic stomach before being able to colonize the intestinal mucosa. The chain is Urease subunit gamma from Yersinia enterocolitica.